A 138-amino-acid chain; its full sequence is L-ectoine synthase (138 aa).

The protein belongs to the ectoine synthase family.

The enzyme catalyses (2S)-4-acetamido-2-aminobutanoate = L-ectoine + H2O. It participates in amine and polyamine biosynthesis; ectoine biosynthesis; L-ectoine from L-aspartate 4-semialdehyde: step 3/3. Functionally, catalyzes the circularization of gamma-N-acetyl-alpha,gamma-diaminobutyric acid (ADABA) to ectoine (1,4,5,6-tetrahydro-2-methyl-4-pyrimidine carboxylic acid), which is an excellent osmoprotectant. This chain is L-ectoine synthase, found in Vibrio cholerae serotype O1 (strain ATCC 39541 / Classical Ogawa 395 / O395).